A 189-amino-acid chain; its full sequence is Probable nicotinate-nucleotide adenylyltransferase (189 aa).

It belongs to the NadD family.

The catalysed reaction is nicotinate beta-D-ribonucleotide + ATP + H(+) = deamido-NAD(+) + diphosphate. It participates in cofactor biosynthesis; NAD(+) biosynthesis; deamido-NAD(+) from nicotinate D-ribonucleotide: step 1/1. Functionally, catalyzes the reversible adenylation of nicotinate mononucleotide (NaMN) to nicotinic acid adenine dinucleotide (NaAD). The sequence is that of Probable nicotinate-nucleotide adenylyltransferase from Caulobacter sp. (strain K31).